A 93-amino-acid chain; its full sequence is Consomatin G2 (93 aa).

Positions 1–18 are cleaved as a signal peptide; sequence MQTAYWVMLMMMVCITAP. Residues 19–69 constitute a propeptide that is removed on maturation; it reads LPEGGKPNSGIRGLVPNDLTPQHTLRSLISRRQTDVLLDATLLTTPAPEQR. An intrachain disulfide couples C72 to C77. W74 is modified (D-tryptophan). Positions 79-93 are excised as a propeptide; it reads WRPYPWRRRDLNGKR.

This sequence belongs to the conotoxin C superfamily. Consomatin family. As to expression, expressed by the venom duct.

It is found in the secreted. In terms of biological role, moderately activates human somatostatin receptors (SSTR) with a preferential activation of SSTR1 and SSTR4. In vivo, does not cause behavioral changes in mice within a few minutes of intracranial injection, but causes a progressive loss of movement thereafter. Four to five hours after injection, mice recover, even with the highest dose tested. Shows antinociception and antihyperalgesia activities in two mouse models of acute pain, most probably by acting outside the central nervous system. The sequence is that of Consomatin G2 from Conus geographus (Geography cone).